The primary structure comprises 376 residues: tRNA-specific 2-thiouridylase MnmA (376 aa).

ATP is bound by residues 16 to 23 (AMSGGVDS) and leucine 42. The active-site Nucleophile is the cysteine 111. Residues cysteine 111 and cysteine 210 are joined by a disulfide bond. Glycine 135 lines the ATP pocket. Residues 158–160 (KDQ) form an interaction with tRNA region. Catalysis depends on cysteine 210, which acts as the Cysteine persulfide intermediate.

The protein belongs to the MnmA/TRMU family.

Its subcellular location is the cytoplasm. The catalysed reaction is S-sulfanyl-L-cysteinyl-[protein] + uridine(34) in tRNA + AH2 + ATP = 2-thiouridine(34) in tRNA + L-cysteinyl-[protein] + A + AMP + diphosphate + H(+). Catalyzes the 2-thiolation of uridine at the wobble position (U34) of tRNA, leading to the formation of s(2)U34. This is tRNA-specific 2-thiouridylase MnmA from Streptomyces avermitilis (strain ATCC 31267 / DSM 46492 / JCM 5070 / NBRC 14893 / NCIMB 12804 / NRRL 8165 / MA-4680).